A 1058-amino-acid chain; its full sequence is Kinesin-like protein KIN-5D (1058 aa).

Residues 1–43 (MDSIQQRRGGIVSLSPAQTPRSSDKSARESRSSESNSTNRNDK) are disordered. The segment covering 22 to 32 (SSDKSARESRS) has biased composition (basic and acidic residues). A Kinesin motor domain is found at 48–390 (NVQVILRCRP…LDYAHRAKNI (343 aa)). 134 to 141 (GQTGTGKT) serves as a coordination point for ATP. Residues 438–517 (QEEAEKKAMA…QANATIKEKE (80 aa)) adopt a coiled-coil conformation.

It belongs to the TRAFAC class myosin-kinesin ATPase superfamily. Kinesin family. KIN-5/BimC subfamily.

It localises to the cytoplasm. The protein resides in the cytoskeleton. Its subcellular location is the spindle. Responsible for microtubule translocation. May be important for the organization of phragmoplast-specific arrays of microtubules. Plays an essential role in stabilizing the mitotic spindle. Required during mitotic cytokinesis. This is Kinesin-like protein KIN-5D from Arabidopsis thaliana (Mouse-ear cress).